A 344-amino-acid polypeptide reads, in one-letter code: Inositol 2-dehydrogenase/D-chiro-inositol 3-dehydrogenase (344 aa).

This sequence belongs to the Gfo/Idh/MocA family. Homotetramer.

The catalysed reaction is myo-inositol + NAD(+) = scyllo-inosose + NADH + H(+). The enzyme catalyses 1D-chiro-inositol + NAD(+) = scyllo-inosine + NADH + H(+). Its pathway is polyol metabolism; myo-inositol degradation into acetyl-CoA; acetyl-CoA from myo-inositol: step 1/7. Functionally, involved in the oxidation of myo-inositol (MI) and D-chiro-inositol (DCI) to 2-keto-myo-inositol (2KMI or 2-inosose) and 1-keto-D-chiro-inositol (1KDCI), respectively. The sequence is that of Inositol 2-dehydrogenase/D-chiro-inositol 3-dehydrogenase from Bacillus velezensis (strain DSM 23117 / BGSC 10A6 / LMG 26770 / FZB42) (Bacillus amyloliquefaciens subsp. plantarum).